The following is a 363-amino-acid chain: uncharacterized protein (363 aa).

Residues 35–262 (TVPGPPGAES…GLSPCCGDGG (228 aa)) are disordered. The segment covering 56 to 75 (AVSSSRNPNSAGRTPNSYLT) has biased composition (polar residues). The segment covering 100 to 116 (GADPALGSLPAAGLSGL) has biased composition (low complexity).

This is an uncharacterized protein from Homo sapiens (Human).